A 106-amino-acid chain; its full sequence is MVVTAYPKSSAGMGVTVLPEYLKQSSYEAYSRPYSAFFLSGCTKQERSPLLARRLVDAWLSFHSILMINEEVSDWEQLSDHYTRRSLFKTIAFRNLQREEEYRPGG.

Its subcellular location is the mitochondrion. This is an uncharacterized protein from Arabidopsis thaliana (Mouse-ear cress).